The sequence spans 699 residues: Osmotic avoidance abnormal protein 3 (699 aa).

Residues 4–327 enclose the Kinesin motor domain; sequence SVRVAVRCRP…LRYANRAKNI (324 aa). ATP is bound at residue 87-94; it reads GQTGSGKT. Residues 339–523 are a coiled coil; it reads DALLREYQEE…EIEDLHGEFE (185 aa).

It belongs to the TRAFAC class myosin-kinesin ATPase superfamily. Kinesin family. Kinesin II subfamily. Expressed in an exclusive set of 26 chemosensory neurons whose dendritic endings are exposed to the external environment; six IL2 neurons of the inner labial sensilla, 8 pairs of amphid neurons in the head, and 2 pairs of phasmid neurons in the tail.

The protein localises to the cytoplasm. The protein resides in the cytoskeleton. It is found in the cell projection. Its subcellular location is the cilium. It localises to the cilium axoneme. The protein localises to the cilium basal body. In terms of biological role, kinesin motor protein which is required for the anterograde intraflagellar transport (IFT) along the middle segment of the sensory neuron cilia together with the kinesin II motor complex (composed of klp-11, klp-20 and kap-1) and on its own, is required for IFT along the distal segment. In addition, regulates the length of cilia. May have a role during neurogenesis and axonal transport. In Caenorhabditis elegans, this protein is Osmotic avoidance abnormal protein 3.